Reading from the N-terminus, the 485-residue chain is Trk system potassium uptake protein TrkG (485 aa).

Over 1–5 (MNTSH) the chain is Cytoplasmic. Residues 6 to 32 (VRVVTHMCGFLVWLYSLSMLPPMVVAL) traverse the membrane as a helical segment. Over 33-38 (FYKEKS) the chain is Periplasmic. A helical membrane pass occupies residues 39–60 (LFVFFITFVIFFCIGGGAWYTT). Residues 61 to 68 (KKSGIQLR) are Cytoplasmic-facing. Residues 69 to 93 (TRDGFIIIVMFWILFSVISAFPLWI) form a helical membrane-spanning segment. The helical; Pore-forming intramembrane region spans 101–112 (FIDALFEGVSGI). The stretch at 113-118 (TTTGAT) is an intramembrane region. Residues 113-118 (TTTGAT) form a selectivity filter part 1 region. K(+) is bound by residues Thr-114 and Thr-115. The Periplasmic segment spans residues 119 to 127 (VIDDVSSLP). A helical membrane pass occupies residues 128–153 (RAYLYYRSQLNFIGGLGVIVLAVAVL). The Cytoplasmic portion of the chain corresponds to 154–180 (PLLGIGGAKLYQSEMPGPFKDDKLTPR). The chain crosses the membrane as a helical span at residues 181–205 (LADTSRTLWITYSLLGIACIVCYRL). Over 206–208 (AGM) the chain is Periplasmic. Pro-209 is an intramembrane region. Residues 210-221 (LFDAICHGISTV) constitute an intramembrane region (helical; Pore-forming). An intramembrane segment occupies 222-227 (SLGGFS). The tract at residues 222–227 (SLGGFS) is selectivity filter part 2. Residues Leu-223 and Gly-224 each coordinate K(+). Topologically, residues 228–237 (THSESIGYFN) are periplasmic. Residues 238-253 (NYLVELVAGSFSLLSA) constitute an intramembrane region (helical). Residues 277–297 (LRFFLLIALGVIIVTSFQVWH) traverse the membrane as a helical segment. Positions 303-318 (LHGSFIHSFFLASSML) form an intramembrane region, helical; Pore-forming. Residues 319–324 (TDNGLA) lie within the membrane without spanning it. A selectivity filter part 3 region spans residues 319–324 (TDNGLA). K(+) contacts are provided by Asp-320 and Asn-321. Residues 325–332 (TQDYASWP) lie on the Periplasmic side of the membrane. Positions 333 to 344 (THTIVFLLLSSF) form an intramembrane region, helical. The note=Loop between two helices intramembrane region spans 345-357 (FGGCIGSTCGGIK). The helical transmembrane segment at 392–419 (TDRVMRSVWSFFFLYTLFTVFFILVLNG) threads the bilayer. Residues 420–421 (MG) are Periplasmic-facing. The stretch at 422-423 (YD) is an intramembrane region. An intramembrane region (helical; Pore-forming) is located at residues 424–434 (FLTSFATVAAC). The stretch at 435 to 441 (INNMGLG) is an intramembrane region. The tract at residues 436-441 (NNMGLG) is selectivity filter part 4. K(+) is bound by residues Asn-437 and Met-438. At 442–453 (FGATASSFGVLN) the chain is on the periplasmic side. Residues 454-465 (DIAKCLMCIAMI) constitute an intramembrane region (helical).

It belongs to the TrkH potassium transport family.

It is found in the cell inner membrane. Low-affinity potassium transport system. Interacts with Trk system potassium uptake protein TrkA. Requires TrkE (sapD) for maximal transport activity, low activity is seen in its absence; no further stimulation is seen with SapF. Transport in the absence of SapD is dependent on a high membrane potential and a high cytoplasmic ATP concentration, suggesting this protein may be able to interact with other ATP-binding proteins. Can transport potassium and rubidium. This Escherichia coli (strain K12) protein is Trk system potassium uptake protein TrkG (trkG).